The chain runs to 633 residues: MESKTYYLLRTEEYGDYEMFTIVEDKYFFDHIHRSDKITQVKPDYDRFGFKICEDEQTYLTNYIIELETLSLFDIDTVDRLIASTENKLGIYGHLYCLYIKNNRLDLCDYLIQSNYEYDPTSNCDDILEFVPDENEADVLMYIINNNNFFKIKWSEIATHVIGYTECYDVIDYLVNFLKQIDCNIDYDTIIEECYYSRDGYSDDTFFNETIKILLRLECVNVNKLLEIACIFSITEIVTHLLDIGTEYDFNTILKSHISLHILKIFLNRGNILDSDSVKILLSTNKGWKFSQTFSYLMDEQYITQELVDKNLVDIVIDNNFPVLKRLIEKFDLSELIDYDVVMKKAIMNSSLDIIDYCISNGTDVNNYMTYAFQHYNQSCFTHLLNQGGTLSTDNLVYRPENLRESKYQNVQYIDIVIDNNLDSIENILDNVLEYYHYNTDICNYVLNKINYNSIVLPKLTNKIIRNYYYNECINDKYIDLVKSKINPNDIDKSIIAIVTDDFDSAKQLIMENNLYDNLKILFVAIMKYDIDMLKFLFEINDNSNDYLQWTLLFSLVGNCKSVKFIMEDIGVKPERMKEFRFIMKKSRDTCTKYFKLNGYDVSIDNEDNCDEYPVVKFFKEMGIYLGDYIYTL.

7 ANK repeats span residues 91 to 120 (IYGH…EYDP), 123 to 152 (NCDD…FFKI), 221 to 250 (NVNK…EYDF), 252 to 275 (TILK…ILDS), 338 to 367 (DYDV…DVNN), 369 to 393 (MTYA…TLST), and 517 to 546 (DNLK…NSND).

This Acanthamoeba polyphaga mimivirus (APMV) protein is Putative ankyrin repeat protein L774.